The primary structure comprises 132 residues: Small ribosomal subunit protein uS8 (132 aa).

It belongs to the universal ribosomal protein uS8 family. Part of the 30S ribosomal subunit. Contacts proteins S5 and S12.

Its function is as follows. One of the primary rRNA binding proteins, it binds directly to 16S rRNA central domain where it helps coordinate assembly of the platform of the 30S subunit. The polypeptide is Small ribosomal subunit protein uS8 (Kineococcus radiotolerans (strain ATCC BAA-149 / DSM 14245 / SRS30216)).